The following is a 299-amino-acid chain: Cuticle collagen 34 (299 aa).

The tract at residues Pro105–Pro282 is disordered. The span at Pro129–Pro162 shows a compositional bias: pro residues. The span at Asp164–Gly181 shows a compositional bias: low complexity. Pro residues-rich tracts occupy residues Glu182 to Pro195 and Pro215 to Pro233. The tract at residues Gly216–Arg278 is triple-helical region. The segment covering Asn251–Pro263 has biased composition (low complexity). Residues Ala265–Ser274 are compositionally biased toward pro residues.

It belongs to the cuticular collagen family. As to quaternary structure, collagen polypeptide chains are complexed within the cuticle by disulfide bonds and other types of covalent cross-links.

In terms of biological role, nematode cuticles are composed largely of collagen-like proteins. The cuticle functions both as an exoskeleton and as a barrier to protect the worm from its environment. The polypeptide is Cuticle collagen 34 (col-34) (Caenorhabditis elegans).